Consider the following 525-residue polypeptide: ALBINO3-like protein 2, chloroplastic (525 aa).

A run of 4 helical transmembrane segments spans residues 99–119, 167–187, 217–237, and 262–282; these read WMII…LLIL, LWFF…MASI, FGPV…QISF, and ILSV…LVYW. TPR repeat units follow at residues 346–379, 380–413, 425–458, and 467–500; these read PEEL…DPGY, VRGL…LLDE, MLAS…REPG, and FEAL…NPAY.

It belongs to the OXA1/ALB3/YidC (TC 2.A.9.2) family.

The protein resides in the plastid. It localises to the chloroplast thylakoid membrane. Its function is as follows. Probably required for the insertion of integral membrane proteins into the chloroplast thylakoid membranes. The protein is ALBINO3-like protein 2, chloroplastic (ALB3L2) of Arabidopsis thaliana (Mouse-ear cress).